The following is a 525-amino-acid chain: NAD(P)H-quinone oxidoreductase subunit 2 (525 aa).

Helical transmembrane passes span 14 to 34 (AIWP…VDLV), 42 to 62 (SLPA…VLQW), 78 to 98 (PVSI…VMMA), 117 to 137 (LTAT…MVFV), 167 to 187 (LLTG…LYGL), 201 to 221 (LANA…GIGF), 240 to 260 (PTPV…ALAI), 276 to 296 (AVLS…AIAQ), 302 to 322 (LLAY…VAGT), 330 to 350 (IFYL…VTLF), 374 to 394 (LCLS…GFFG), 396 to 416 (LYLF…VGLV), 462 to 482 (VGMV…NPLF), and 494 to 514 (FLGF…SLAV).

The protein belongs to the complex I subunit 2 family. In terms of assembly, NDH-1 can be composed of about 15 different subunits; different subcomplexes with different compositions have been identified which probably have different functions.

The protein localises to the cellular thylakoid membrane. It catalyses the reaction a plastoquinone + NADH + (n+1) H(+)(in) = a plastoquinol + NAD(+) + n H(+)(out). The catalysed reaction is a plastoquinone + NADPH + (n+1) H(+)(in) = a plastoquinol + NADP(+) + n H(+)(out). Functionally, NDH-1 shuttles electrons from an unknown electron donor, via FMN and iron-sulfur (Fe-S) centers, to quinones in the respiratory and/or the photosynthetic chain. The immediate electron acceptor for the enzyme in this species is believed to be plastoquinone. Couples the redox reaction to proton translocation, and thus conserves the redox energy in a proton gradient. Cyanobacterial NDH-1 also plays a role in inorganic carbon-concentration. This chain is NAD(P)H-quinone oxidoreductase subunit 2, found in Synechococcus sp. (strain JA-3-3Ab) (Cyanobacteria bacterium Yellowstone A-Prime).